The following is a 262-amino-acid chain: Probable esterase azaC (262 aa).

Catalysis depends on charge relay system residues Ser-119, Asp-188, and His-216.

The protein belongs to the LovG family.

The protein operates within secondary metabolite biosynthesis. Functionally, probable esterase; part of the gene cluster that mediates the biosynthesis of azaphilones, a class of fungal metabolites characterized by a highly oxygenated pyrano-quinone bicyclic core and exhibiting a broad range of bioactivities. In the first step, the non-reducing polyketide synthase azaA forms the hexaketide precursor from successive condensations of five malonyl-CoA units, presumably with a simple acetyl-CoA starter unit. The reactive polyketide chain then undergoes a PT-mediated C2-C7 cyclization to afford the aromatic ring and is eventually released as an aldehyde through the R-domain. The putative ketoreductase azaE is proposed to catalyze the reduction of the terminal ketone resulting in the early culture product FK17-P2a. The monooxygenase azaH was demonstrated to be the only enzyme required to convert FK17-P2a to azanigerone E. AzaH first hydroxylates the benzaldehyde intermediate FK17-P2a at C4, which triggers the formation of the pyran-ring to afford azanigerone E. In parallel, the 2,4-dimethylhexanoyl chain is synthesized by the HR-PKS azaB and is proposed to be transferred to the C4-hydroxyl of azanigerone E by the acyltransferase azaD directly from the ACP domain of azaB. Alternatively, the 2,4-dimethyl-hexanoyl chain may be offloaded from the HR-PKS as a carboxylic acid and converted to an acyl-CoA by azaF. The resulting acyl-CoA molecule could then be taken up as a substrate by AzaD to form azanigerone B. To yield the carboxylic acid substituent in azanigerone A, the hydroxypropyl side chain of azanigerone B would need to undergo a C-C oxidative cleavage catalyzed by cytochrome P450 AzaI. AzaI is proposed to act on a vicinal diol that leads to a C-C bond scission either through an alkoxyradical intermediate or a peroxy complex. In the biosynthesis of azanigerone A, azanigerone B first undergoes hydroxylation at C10, possibly catalyzed by one of the two FAD-dependent monooxygenases encoded in the cluster, azaG or azaL, resulting in the vicinal diol azanigerone C. Oxidative cleavage of azanigerone C by azaI would yield the corresponding aldehyde derivative of azanigerone A. Finally, the dehydrogenase azaJ is proposed to convert the aldehyde functional group into the carboxylic acid, completing the conversion from azanigerone B to azanigerone A. Alternatively, the oxidation of aldehyde to carboxylic acid may be catalyzed by the same P450 enzyme azaI via consecutive oxidation or by endogenous alcohol dehydrogenase. The polypeptide is Probable esterase azaC (Aspergillus niger (strain ATCC 1015 / CBS 113.46 / FGSC A1144 / LSHB Ac4 / NCTC 3858a / NRRL 328 / USDA 3528.7)).